Reading from the N-terminus, the 368-residue chain is Phospho-N-acetylmuramoyl-pentapeptide-transferase (368 aa).

The next 10 membrane-spanning stretches (helical) occupy residues 34–54 (GAVVTGALFVFLFGPWIIDHL), 79–99 (TPTMGGLMILSGLVVSTVLWA), 102–122 (LNPYVWIVLAVTLGFGFVGFY), 140–160 (ARILIEAGIALVACYALVRLG), 176–196 (LVIKFGWMYVIFGAFVIVGAG), 207–227 (GLAIVPVMIASASFGLIAYLA), 247–267 (LAVLCGAVLGAGLGFLWFNAP), 271–291 (IFMGDTGSLALGGMLGSIAVA), 296–316 (IVLAVIGGLFVLEAVSVIVQV), and 345–365 (QIVIRFWIISVMLALVGLSTL).

Belongs to the glycosyltransferase 4 family. MraY subfamily. Mg(2+) serves as cofactor.

It localises to the cell inner membrane. The enzyme catalyses UDP-N-acetyl-alpha-D-muramoyl-L-alanyl-gamma-D-glutamyl-meso-2,6-diaminopimeloyl-D-alanyl-D-alanine + di-trans,octa-cis-undecaprenyl phosphate = di-trans,octa-cis-undecaprenyl diphospho-N-acetyl-alpha-D-muramoyl-L-alanyl-D-glutamyl-meso-2,6-diaminopimeloyl-D-alanyl-D-alanine + UMP. It functions in the pathway cell wall biogenesis; peptidoglycan biosynthesis. Its function is as follows. Catalyzes the initial step of the lipid cycle reactions in the biosynthesis of the cell wall peptidoglycan: transfers peptidoglycan precursor phospho-MurNAc-pentapeptide from UDP-MurNAc-pentapeptide onto the lipid carrier undecaprenyl phosphate, yielding undecaprenyl-pyrophosphoryl-MurNAc-pentapeptide, known as lipid I. This chain is Phospho-N-acetylmuramoyl-pentapeptide-transferase, found in Bradyrhizobium sp. (strain BTAi1 / ATCC BAA-1182).